Consider the following 220-residue polypeptide: Riboflavin kinase (220 aa).

The segment at 1–92 is H-T-H motif-like; it reads METDDQYYRA…LSRILAIKNN (92 aa). Residues 93-220 are riboflavin kinase; the sequence is VVITGTVTSG…GDRVSVEVYT (128 aa). 102-107 provides a ligand contact to CDP; it reads GMGEGR. Mg(2+) is bound by residues Thr131 and Asn133. Thr188 and Glu195 together coordinate FMN. 200 to 203 contacts CDP; it reads KYLR.

Belongs to the archaeal riboflavin kinase family. Mg(2+) is required as a cofactor.

The enzyme catalyses riboflavin + CTP = CDP + FMN + H(+). Its pathway is cofactor biosynthesis; FMN biosynthesis; FMN from riboflavin (CTP route): step 1/1. Functionally, catalyzes the CTP-dependent phosphorylation of riboflavin (vitamin B2) to form flavin mononucleotide (FMN). In Thermoplasma acidophilum (strain ATCC 25905 / DSM 1728 / JCM 9062 / NBRC 15155 / AMRC-C165), this protein is Riboflavin kinase (ribK).